We begin with the raw amino-acid sequence, 107 residues long: Flagellar transcriptional regulator FlhD (107 aa).

This sequence belongs to the FlhD family. As to quaternary structure, homodimer; disulfide-linked. Forms a heterohexamer composed of two FlhC and four FlhD subunits. Each FlhC binds a FlhD dimer, forming a heterotrimer, and a hexamer assembles by dimerization of two heterotrimers.

It is found in the cytoplasm. Functions in complex with FlhC as a master transcriptional regulator that regulates transcription of several flagellar and non-flagellar operons by binding to their promoter region. Activates expression of class 2 flagellar genes, including fliA, which is a flagellum-specific sigma factor that turns on the class 3 genes. Also regulates genes whose products function in a variety of physiological pathways. The polypeptide is Flagellar transcriptional regulator FlhD (Bordetella pertussis (strain Tohama I / ATCC BAA-589 / NCTC 13251)).